Reading from the N-terminus, the 118-residue chain is Large ribosomal subunit protein bL20 (118 aa).

Belongs to the bacterial ribosomal protein bL20 family.

Functionally, binds directly to 23S ribosomal RNA and is necessary for the in vitro assembly process of the 50S ribosomal subunit. It is not involved in the protein synthesizing functions of that subunit. The protein is Large ribosomal subunit protein bL20 of Staphylococcus aureus (strain Mu3 / ATCC 700698).